A 957-amino-acid polypeptide reads, in one-letter code: Sorting nexin-13 (957 aa).

Residues 97–284 form the PXA domain; that stretch reads ANIIDEPLQQ…YVIWMIRDSN (188 aa). Residues 373–511 enclose the RGS domain; it reads PLDSILVDNV…SFRQNALYVR (139 aa). One can recognise a PX domain in the interval 559-680; the sequence is VQLHAYISDT…DFLENKAYSK (122 aa). Residues Arg601, Ser603, Lys628, and Arg642 each coordinate a 1,2-diacyl-sn-glycero-3-phospho-(1D-myo-inositol-3-phosphate).

The protein belongs to the sorting nexin family.

The protein localises to the early endosome membrane. May be involved in several stages of intracellular trafficking. Acts as a GAP for Galphas. May play a role in endosome homeostasis. This Mus musculus (Mouse) protein is Sorting nexin-13 (Snx13).